The chain runs to 380 residues: Cytochrome b (380 aa).

Transmembrane regions (helical) follow at residues 34–54 (FGSL…LLAM), 78–99 (WLIR…YLHI), 114–134 (WNTG…GYVL), and 179–199 (FFAL…IHLT). Heme b contacts are provided by His84 and His98. Residues His183 and His197 each coordinate heme b. Residue His202 coordinates a ubiquinone. 4 consecutive transmembrane segments (helical) span residues 227–247 (TKDT…ALFS), 289–309 (LGGV…PLLH), 321–341 (LSQL…WIGS), and 348–368 (FIII…ILFP).

This sequence belongs to the cytochrome b family. The cytochrome bc1 complex contains 11 subunits: 3 respiratory subunits (MT-CYB, CYC1 and UQCRFS1), 2 core proteins (UQCRC1 and UQCRC2) and 6 low-molecular weight proteins (UQCRH/QCR6, UQCRB/QCR7, UQCRQ/QCR8, UQCR10/QCR9, UQCR11/QCR10 and a cleavage product of UQCRFS1). This cytochrome bc1 complex then forms a dimer. Heme b serves as cofactor.

The protein resides in the mitochondrion inner membrane. In terms of biological role, component of the ubiquinol-cytochrome c reductase complex (complex III or cytochrome b-c1 complex) that is part of the mitochondrial respiratory chain. The b-c1 complex mediates electron transfer from ubiquinol to cytochrome c. Contributes to the generation of a proton gradient across the mitochondrial membrane that is then used for ATP synthesis. The polypeptide is Cytochrome b (MT-CYB) (Aptenodytes patagonicus (King penguin)).